A 389-amino-acid polypeptide reads, in one-letter code: S-adenosylmethionine synthase (389 aa).

ATP is bound at residue histidine 16. Aspartate 18 is a binding site for Mg(2+). Position 44 (glutamate 44) interacts with K(+). Glutamate 57 and glutamine 101 together coordinate L-methionine. The tract at residues glutamine 101 to glutamate 111 is flexible loop. ATP is bound by residues aspartate 168–lysine 170, arginine 234–phenylalanine 235, aspartate 243, arginine 249–lysine 250, alanine 266, and lysine 270. Residue aspartate 243 participates in L-methionine binding. L-methionine is bound at residue lysine 274.

This sequence belongs to the AdoMet synthase family. In terms of assembly, homotetramer; dimer of dimers. The cofactor is Mg(2+). It depends on K(+) as a cofactor.

The protein resides in the cytoplasm. It catalyses the reaction L-methionine + ATP + H2O = S-adenosyl-L-methionine + phosphate + diphosphate. The protein operates within amino-acid biosynthesis; S-adenosyl-L-methionine biosynthesis; S-adenosyl-L-methionine from L-methionine: step 1/1. In terms of biological role, catalyzes the formation of S-adenosylmethionine (AdoMet) from methionine and ATP. The overall synthetic reaction is composed of two sequential steps, AdoMet formation and the subsequent tripolyphosphate hydrolysis which occurs prior to release of AdoMet from the enzyme. This Magnetococcus marinus (strain ATCC BAA-1437 / JCM 17883 / MC-1) protein is S-adenosylmethionine synthase.